Consider the following 467-residue polypeptide: E3 ubiquitin-protein ligase TRIM11 (467 aa).

The RING-type zinc-finger motif lies at cysteine 16–arginine 57. Phosphoserine is present on serine 85. The B box-type zinc finger occupies valine 87 to leucine 127. Zn(2+) is bound by residues cysteine 92, histidine 95, cysteine 114, and histidine 119. The stretch at leucine 127 to leucine 207 forms a coiled coil. Residues glutamate 267–serine 460 form the B30.2/SPRY domain. The segment covering aspartate 304–glutamine 313 has biased composition (basic and acidic residues). A disordered region spans residues aspartate 304–aspartate 325.

Belongs to the TRIM/RBCC family. In terms of assembly, binds cytoplasmic tail of integrin alpha-1. Interacts with the HN peptide. Interacts with PHOX2B. Interacts (when autoubiquitinated) with SQSTM1/p62; promoting AIM2 recruitment to autophagosomes. Interacts with AIM2; promoting its autophagy-dependent degradation. Post-translationally, autoubiquitinated upon DNA stimulation; autoubiquitination promotes interaction with SQSTM1/p62 and recruitment of AIM2 to autophagosomes.

The protein resides in the cytoplasm. The protein localises to the nucleus. It catalyses the reaction S-ubiquitinyl-[E2 ubiquitin-conjugating enzyme]-L-cysteine + [acceptor protein]-L-lysine = [E2 ubiquitin-conjugating enzyme]-L-cysteine + N(6)-ubiquitinyl-[acceptor protein]-L-lysine.. It participates in protein modification; protein ubiquitination. In terms of biological role, E3 ubiquitin-protein ligase that promotes the degradation of insoluble ubiquitinated proteins, including insoluble PAX6, poly-Gln repeat expanded HTT and poly-Ala repeat expanded ARX. Mediates PAX6 ubiquitination leading to proteasomal degradation, thereby modulating cortical neurogenesis. May also inhibit PAX6 transcriptional activity, possibly in part by preventing the binding of PAX6 to its consensus sequences. May contribute to the regulation of the intracellular level of HN (humanin) or HN-containing proteins through the proteasomal degradation pathway. Mediates MED15 ubiquitination leading to proteasomal degradation. May contribute to the innate restriction of retroviruses. Upon overexpression, reduces HIV-1 and murine leukemia virus infectivity, by suppressing viral gene expression. Antiviral activity depends on a functional E3 ubiquitin-protein ligase domain. May regulate TRIM5 turnover via the proteasome pathway, thus counteracting the TRIM5-mediated cross-species restriction of retroviral infection at early stages of the retroviral life cycle. Acts as an inhibitor of the AIM2 inflammasome by promoting autophagy-dependent degradation of AIM2. Mechanistically, undergoes autoubiquitination upon DNA stimulation, promoting interaction with AIM2 and SQSTM1/p62, leading to AIM2 recruitment to autophagosomes. The protein is E3 ubiquitin-protein ligase TRIM11 (Trim11) of Rattus norvegicus (Rat).